Consider the following 259-residue polypeptide: HTH-type transcriptional regulator TtgV (259 aa).

The region spanning 14–76 (IQVIARAASI…GPAGGFRLGP (63 aa)) is the HTH iclR-type domain. The H-T-H motif DNA-binding region spans 36–59 (LAAIAQLVGLPRSTVQRIINALEE). Residues 89–253 (ILSLVKPYLR…KLNIERAIGR (165 aa)) form the IclR-ED domain.

Functionally, represses the expression of the ttgGHI and ttgVW operons. Binds to the ttgGHI / ttgVW intergenic region, probably preventing binding of RNA polymerase; ttgV dissociates from this region in the presence of 1-hexanol. The sequence is that of HTH-type transcriptional regulator TtgV (ttgV) from Pseudomonas putida (strain DOT-T1E).